Consider the following 175-residue polypeptide: Large ribosomal subunit protein uL10 (175 aa).

Belongs to the universal ribosomal protein uL10 family. As to quaternary structure, part of the ribosomal stalk of the 50S ribosomal subunit. The N-terminus interacts with L11 and the large rRNA to form the base of the stalk. The C-terminus forms an elongated spine to which L12 dimers bind in a sequential fashion forming a multimeric L10(L12)X complex.

In terms of biological role, forms part of the ribosomal stalk, playing a central role in the interaction of the ribosome with GTP-bound translation factors. The sequence is that of Large ribosomal subunit protein uL10 from Prochlorococcus marinus (strain MIT 9211).